The primary structure comprises 91 residues: ATP synthase subunit c (91 aa).

A run of 2 helical transmembrane segments spans residues 4–24 (FTMC…GTGI) and 53–73 (IGLA…LIIL).

The protein belongs to the ATPase C chain family. In terms of assembly, F-type ATPases have 2 components, F(1) - the catalytic core - and F(0) - the membrane proton channel. F(1) has five subunits: alpha(3), beta(3), gamma(1), delta(1), epsilon(1). F(0) has three main subunits: a(1), b(2) and c(10-14). The alpha and beta chains form an alternating ring which encloses part of the gamma chain. F(1) is attached to F(0) by a central stalk formed by the gamma and epsilon chains, while a peripheral stalk is formed by the delta and b chains.

Its subcellular location is the cell inner membrane. In terms of biological role, f(1)F(0) ATP synthase produces ATP from ADP in the presence of a proton or sodium gradient. F-type ATPases consist of two structural domains, F(1) containing the extramembraneous catalytic core and F(0) containing the membrane proton channel, linked together by a central stalk and a peripheral stalk. During catalysis, ATP synthesis in the catalytic domain of F(1) is coupled via a rotary mechanism of the central stalk subunits to proton translocation. Its function is as follows. Key component of the F(0) channel; it plays a direct role in translocation across the membrane. A homomeric c-ring of between 10-14 subunits forms the central stalk rotor element with the F(1) delta and epsilon subunits. The chain is ATP synthase subunit c from Trichlorobacter lovleyi (strain ATCC BAA-1151 / DSM 17278 / SZ) (Geobacter lovleyi).